We begin with the raw amino-acid sequence, 263 residues long: N-acyl homoserine lactonase AttM (263 aa).

The Zn(2+) site is built by His-103, His-105, Asp-107, His-108, His-180, Asp-202, and His-247.

Belongs to the metallo-beta-lactamase superfamily. Requires Zn(2+) as cofactor.

The catalysed reaction is an N-acyl-L-homoserine lactone + H2O = an N-acyl-L-homoserine + H(+). The chain is N-acyl homoserine lactonase AttM from Azorhizobium caulinodans (strain ATCC 43989 / DSM 5975 / JCM 20966 / LMG 6465 / NBRC 14845 / NCIMB 13405 / ORS 571).